The sequence spans 601 residues: Transcription factor ATEG_07666 (601 aa).

The segment at residues 17–44 (CEECRRRKARCDRVRPKCGFCTENGMQC) is a DNA-binding region (zn(2)-C6 fungal-type).

It is found in the nucleus. Specific transcriptional regulator for the azasperpyranone A biosynthesis cluster B. In Aspergillus terreus (strain NIH 2624 / FGSC A1156), this protein is Transcription factor ATEG_07666.